The sequence spans 784 residues: Phosphate transporter PHO1 homolog 1 (784 aa).

Topologically, residues 1 to 387 are cytoplasmic; that stretch reads MVKFTKQFEG…HHRKESHSVT (387 aa). The SPX domain occupies 2–335; sequence VKFTKQFEGQ…GKQILPIYLK (334 aa). A helical membrane pass occupies residues 388–408; sequence FFIGLFTGCFVALLAGYIIVA. Residues 409–429 lie on the Extracellular side of the membrane; sequence HLTGMYRQHSANTFYMETAYP. Residues 430 to 450 traverse the membrane as a helical segment; it reads VLSMFGLLFLHLFLYGCNIFM. Residues 451–474 lie on the Cytoplasmic side of the membrane; that stretch reads WRKARINYSFIFELGSKNELKYRD. Residues 475-495 traverse the membrane as a helical segment; that stretch reads VFLICTASMSAIAGVMFVHLS. The Extracellular portion of the chain corresponds to 496–507; that stretch reads LLEKGYSFRQVQ. A helical membrane pass occupies residues 508-528; that stretch reads VIPGLLLLGFLLILICPLNIF. The Cytoplasmic portion of the chain corresponds to 529-654; sequence YKSSRYRLIS…TKVAYEKERS (126 aa). The region spanning 593 to 784 is the EXS domain; that stretch reads MRVKYYRDLA…LPFREVDEED (192 aa). Residues 655–675 form a helical membrane-spanning segment; that stretch reads LGWLCLVVAMSSVATIYQLYW. The Extracellular segment spans residues 676-703; sequence DFVKDWGLLQHNSNNPWLRNQLMLRQKS. A helical membrane pass occupies residues 704–724; it reads IYYFSMVLNLVLRLAWLQTVL. The Cytoplasmic portion of the chain corresponds to 725–784; sequence HSSFEHVDYRVTGLFLAALEVIRRGQWNFYRLENEHLNNAGKFRAVKTVPLPFREVDEED.

This sequence belongs to the SYG1 (TC 2.A.94) family. As to expression, expressed in vascular cylinder of roots, leaves, stems, petals, sepals and filaments. Expressed in receptacle, stigma apex and anther connective tissue.

It is found in the cell membrane. Its function is as follows. Contributes to the loading of inorganic phosphate (Pi) into the root xylem vessels. The protein is Phosphate transporter PHO1 homolog 1 (PHO1-H1) of Arabidopsis thaliana (Mouse-ear cress).